Reading from the N-terminus, the 366-residue chain is Dual-specificity RNA methyltransferase RlmN (366 aa).

E91 functions as the Proton acceptor in the catalytic mechanism. One can recognise a Radical SAM core domain in the interval 97-333 (EDDRGTLCVS…TTVRKTRGED (237 aa)). Cysteines 104 and 338 form a disulfide. 3 residues coordinate [4Fe-4S] cluster: C111, C115, and C118. Residues 164–165 (GE), S196, 218–220 (SLH), and N295 contribute to the S-adenosyl-L-methionine site. The active-site S-methylcysteine intermediate is the C338.

Belongs to the radical SAM superfamily. RlmN family. [4Fe-4S] cluster is required as a cofactor.

It is found in the cytoplasm. It catalyses the reaction adenosine(2503) in 23S rRNA + 2 reduced [2Fe-2S]-[ferredoxin] + 2 S-adenosyl-L-methionine = 2-methyladenosine(2503) in 23S rRNA + 5'-deoxyadenosine + L-methionine + 2 oxidized [2Fe-2S]-[ferredoxin] + S-adenosyl-L-homocysteine. The catalysed reaction is adenosine(37) in tRNA + 2 reduced [2Fe-2S]-[ferredoxin] + 2 S-adenosyl-L-methionine = 2-methyladenosine(37) in tRNA + 5'-deoxyadenosine + L-methionine + 2 oxidized [2Fe-2S]-[ferredoxin] + S-adenosyl-L-homocysteine. Its function is as follows. Specifically methylates position 2 of adenine 2503 in 23S rRNA and position 2 of adenine 37 in tRNAs. m2A2503 modification seems to play a crucial role in the proofreading step occurring at the peptidyl transferase center and thus would serve to optimize ribosomal fidelity. The protein is Dual-specificity RNA methyltransferase RlmN of Laribacter hongkongensis (strain HLHK9).